The chain runs to 352 residues: DNA integrity scanning protein DisA (352 aa).

In terms of domain architecture, DAC spans 3 to 143; sequence PQELIEKIKL…NYKYVVNQVD (141 aa). Residues G71, L89, and 102–106 contribute to the ATP site; that span reads TRHRT.

This sequence belongs to the DisA family. Homooctamer. Mg(2+) serves as cofactor.

The enzyme catalyses 2 ATP = 3',3'-c-di-AMP + 2 diphosphate. Its function is as follows. Participates in a DNA-damage check-point. DisA forms globular foci that rapidly scan along the chromosomes searching for lesions. In terms of biological role, also has diadenylate cyclase activity, catalyzing the condensation of 2 ATP molecules into cyclic di-AMP (c-di-AMP). c-di-AMP likely acts as a signaling molecule that may couple DNA integrity with a cellular process. The polypeptide is DNA integrity scanning protein DisA (Thermotoga petrophila (strain ATCC BAA-488 / DSM 13995 / JCM 10881 / RKU-1)).